A 493-amino-acid polypeptide reads, in one-letter code: uncharacterized protein (493 aa).

The interval 96-124 (TTVAKASPPPAKPASAPTEITWKGSPQFT) is disordered.

This is an uncharacterized protein from Caulobacter vibrioides (strain ATCC 19089 / CIP 103742 / CB 15) (Caulobacter crescentus).